The primary structure comprises 370 residues: MAERELYIGVMSGTSLDGVDTALVALQDDNIELLAHHDYPIPADLKQRLLNVCIGQPTTLIAMGELEHDLGHLFSDAVLALLQHSGYRAEHIRAIGCHGQTVFHQPTGTKPFTMQIGDANIIATRTGITTVADFRRKDVALGGQGAPLVPAFHRTIFHAEQSTVVVLNIGGIANISVLKPNGEVVGYDTGPGNMLMDSWCQKERNQPYDKDALWAKQGSVNAALLSHLKQDHYFALPAPKSTGRELFNLPWLETQLATFSVDATDVQRTLCEFTAQTIVEQVAPFAEGPQPQLLVCGGGAQNPLLMERLQALLPSWQVAPTTQMGVDGDNMEAMAFAWLAQRRIHGLPSNLPAVTGASRLASLGVIYYPD.

13–20 (GTSLDGVD) lines the ATP pocket.

Belongs to the anhydro-N-acetylmuramic acid kinase family.

The catalysed reaction is 1,6-anhydro-N-acetyl-beta-muramate + ATP + H2O = N-acetyl-D-muramate 6-phosphate + ADP + H(+). Its pathway is amino-sugar metabolism; 1,6-anhydro-N-acetylmuramate degradation. It participates in cell wall biogenesis; peptidoglycan recycling. In terms of biological role, catalyzes the specific phosphorylation of 1,6-anhydro-N-acetylmuramic acid (anhMurNAc) with the simultaneous cleavage of the 1,6-anhydro ring, generating MurNAc-6-P. Is required for the utilization of anhMurNAc either imported from the medium or derived from its own cell wall murein, and thus plays a role in cell wall recycling. The polypeptide is Anhydro-N-acetylmuramic acid kinase (Vibrio cholerae serotype O1 (strain ATCC 39315 / El Tor Inaba N16961)).